The sequence spans 86 residues: Large ribosomal subunit protein bL27 (86 aa).

The span at 1–10 (MAQKKGGGST) shows a compositional bias: gly residues. The segment at 1–21 (MAQKKGGGSTRNGRDSESKRL) is disordered.

This sequence belongs to the bacterial ribosomal protein bL27 family.

The chain is Large ribosomal subunit protein bL27 from Ralstonia pickettii (strain 12J).